Here is a 564-residue protein sequence, read N- to C-terminus: Septation ring formation regulator EzrA (564 aa).

Over 1 to 4 the chain is Extracellular; it reads MVLY. A helical membrane pass occupies residues 5–23; sequence IILAIIVIILIAVGVLFYL. Topologically, residues 24 to 564 are cytoplasmic; sequence RSNKRQIIEK…KHIEEEVIKQ (541 aa). 5 coiled-coil regions span residues 99–138, 190–223, 271–300, 350–435, and 471–550; these read SFNA…YKDN, DGNY…LIRE, LISR…LIEH, VRQF…RRLL, and VKQL…ESVE.

The protein belongs to the EzrA family.

It localises to the cell membrane. Functionally, negative regulator of FtsZ ring formation; modulates the frequency and position of FtsZ ring formation. Inhibits FtsZ ring formation at polar sites. Interacts either with FtsZ or with one of its binding partners to promote depolymerization. In Staphylococcus aureus (strain Mu3 / ATCC 700698), this protein is Septation ring formation regulator EzrA.